A 359-amino-acid polypeptide reads, in one-letter code: Histamine H2 receptor (359 aa).

The Extracellular segment spans residues methionine 1–serine 22. The N-linked (GlcNAc...) asparagine glycan is linked to asparagine 4. A helical membrane pass occupies residues valine 23–glycine 44. At leucine 45–isoleucine 57 the chain is on the cytoplasmic side. Residues valine 58–serine 81 form a helical membrane-spanning segment. At cysteine 82 to asparagine 92 the chain is on the extracellular side. Cysteine 91 and cysteine 174 form a disulfide bridge. Residues isoleucine 93–leucine 114 traverse the membrane as a helical segment. The Cytoplasmic segment spans residues aspartate 115–arginine 134. Residues valine 135–asparagine 159 traverse the membrane as a helical segment. Residues serine 160–leucine 180 are Extracellular-facing. Residues valine 181–arginine 204 traverse the membrane as a helical segment. Residues isoleucine 205–valine 234 are Cytoplasmic-facing. Residues threonine 235 to glycine 258 traverse the membrane as a helical segment. Residues leucine 259–glutamate 267 are Extracellular-facing. Residues alanine 268 to alanine 289 traverse the membrane as a helical segment. The Cytoplasmic segment spans residues threonine 290 to arginine 359. Cysteine 305 carries the S-palmitoyl cysteine lipid modification. Residues histidine 310–asparagine 327 are compositionally biased toward polar residues. Residues histidine 310–arginine 359 form a disordered region. A compositionally biased stretch (basic and acidic residues) spans glutamine 328–leucine 340.

The protein belongs to the G-protein coupled receptor 1 family. Gastric fundus and, to a lesser extent, in brain.

Its subcellular location is the cell membrane. Functionally, the H2 subclass of histamine receptors mediates gastric acid secretion. The activity of this receptor is mediated by G proteins which activate adenylyl cyclase. In Canis lupus familiaris (Dog), this protein is Histamine H2 receptor (HRH2).